The chain runs to 648 residues: Acetyl-coenzyme A synthetase (648 aa).

CoA-binding positions include 190–193 (RGGR) and threonine 310. ATP is bound by residues 386-388 (GEP), 410-415 (DTWWQT), aspartate 499, and arginine 514. Serine 522 lines the CoA pocket. ATP is bound at residue arginine 525. Positions 536, 538, and 541 each coordinate Mg(2+). Residue arginine 583 coordinates CoA. Lysine 608 carries the post-translational modification N6-acetyllysine.

The protein belongs to the ATP-dependent AMP-binding enzyme family. Mg(2+) is required as a cofactor. In terms of processing, acetylated. Deacetylation by the SIR2-homolog deacetylase activates the enzyme.

It carries out the reaction acetate + ATP + CoA = acetyl-CoA + AMP + diphosphate. In terms of biological role, catalyzes the conversion of acetate into acetyl-CoA (AcCoA), an essential intermediate at the junction of anabolic and catabolic pathways. AcsA undergoes a two-step reaction. In the first half reaction, AcsA combines acetate with ATP to form acetyl-adenylate (AcAMP) intermediate. In the second half reaction, it can then transfer the acetyl group from AcAMP to the sulfhydryl group of CoA, forming the product AcCoA. The sequence is that of Acetyl-coenzyme A synthetase from Methylobacterium radiotolerans (strain ATCC 27329 / DSM 1819 / JCM 2831 / NBRC 15690 / NCIMB 10815 / 0-1).